A 59-amino-acid polypeptide reads, in one-letter code: Gonadotropin-releasing hormone receptor (59 aa).

At 1 to 2 (VA) the chain is on the cytoplasmic side. Residues 3 to 23 (FATSFTVCWTPYYVLGIWYWF) form a helical membrane-spanning segment. Topologically, residues 24 to 37 (DPEMLNRVSDPVNH) are extracellular. A helical transmembrane segment spans residues 38–58 (FFFLFAFLNPCFDPLIYGYFS). Position 59 (Leu-59) is a topological domain, cytoplasmic.

It belongs to the G-protein coupled receptor 1 family.

It localises to the cell membrane. Its function is as follows. Receptor for gonadotropin releasing hormone (GnRH) that mediates the action of GnRH to stimulate the secretion of the gonadotropic hormones luteinizing hormone (LH) and follicle-stimulating hormone (FSH). This receptor mediates its action by association with G-proteins that activate a phosphatidylinositol-calcium second messenger system. This Macaca mulatta (Rhesus macaque) protein is Gonadotropin-releasing hormone receptor (GNRHR).